Here is a 328-residue protein sequence, read N- to C-terminus: Glycerol-3-phosphate dehydrogenase [NAD(P)+] (328 aa).

NADPH-binding residues include tryptophan 15, arginine 35, arginine 36, and lysine 105. 2 residues coordinate sn-glycerol 3-phosphate: lysine 105 and glycine 131. Alanine 135 lines the NADPH pocket. Sn-glycerol 3-phosphate contacts are provided by lysine 186, aspartate 239, serine 249, arginine 250, and asparagine 251. Lysine 186 (proton acceptor) is an active-site residue. Position 250 (arginine 250) interacts with NADPH. 2 residues coordinate NADPH: valine 270 and glutamate 272.

The protein belongs to the NAD-dependent glycerol-3-phosphate dehydrogenase family.

The protein resides in the cytoplasm. It carries out the reaction sn-glycerol 3-phosphate + NAD(+) = dihydroxyacetone phosphate + NADH + H(+). It catalyses the reaction sn-glycerol 3-phosphate + NADP(+) = dihydroxyacetone phosphate + NADPH + H(+). It functions in the pathway membrane lipid metabolism; glycerophospholipid metabolism. In terms of biological role, catalyzes the reduction of the glycolytic intermediate dihydroxyacetone phosphate (DHAP) to sn-glycerol 3-phosphate (G3P), the key precursor for phospholipid synthesis. The polypeptide is Glycerol-3-phosphate dehydrogenase [NAD(P)+] (Deinococcus radiodurans (strain ATCC 13939 / DSM 20539 / JCM 16871 / CCUG 27074 / LMG 4051 / NBRC 15346 / NCIMB 9279 / VKM B-1422 / R1)).